Consider the following 373-residue polypeptide: Spore germination protein KB (373 aa).

The next 10 membrane-spanning stretches (helical) occupy residues 11–31 (LFVM…PGSM), 37–57 (WIAV…YQGI), 78–98 (LSWL…ARVL), 105–125 (LLTF…LMVV), 143–163 (LLFG…IVSG), 185–205 (VFTQ…MIFP), 219–239 (IAMA…ISVL), 269–289 (VFFM…YLYA), 306–326 (LAYP…TNFS), and 338–358 (LYIH…VAVW).

This sequence belongs to the amino acid-polyamine-organocation (APC) superfamily. Spore germination protein (SGP) (TC 2.A.3.9) family.

It localises to the cell membrane. In terms of biological role, involved in the germination response to the combination of glucose, fructose, L-asparagine, and KCl. The polypeptide is Spore germination protein KB (gerKB) (Bacillus subtilis (strain 168)).